A 57-amino-acid polypeptide reads, in one-letter code: Granulin-2 (57 aa).

Intrachain disulfides connect C4/C16 and C10/C26.

This sequence belongs to the granulin family. In terms of processing, granulins are disulfide bridged. As to expression, ubiquitous.

The protein localises to the secreted. Its function is as follows. Granulins have possible cytokine-like activity. They may play a role in inflammation, wound repair, and tissue remodeling. The protein is Granulin-2 of Cyprinus carpio (Common carp).